We begin with the raw amino-acid sequence, 87 residues long: Small ribosomal subunit protein bS20 (87 aa).

A disordered region spans residues 1 to 26; the sequence is MANIKSAKKRAVQSEKARKHNASRRS.

Belongs to the bacterial ribosomal protein bS20 family.

Its function is as follows. Binds directly to 16S ribosomal RNA. This Enterobacter sp. (strain 638) protein is Small ribosomal subunit protein bS20.